The chain runs to 421 residues: NADH-quinone oxidoreductase subunit F (421 aa).

NAD(+) is bound at residue 54 to 63 (GRGGAGFSTG). 166–213 (GAGAYICGEETALLESLEGKKGMPRLKPPFPAGFGLYGCPTTINNVES) lines the FMN pocket. Residues cysteine 344, cysteine 347, cysteine 350, and cysteine 390 each coordinate [4Fe-4S] cluster.

This sequence belongs to the complex I 51 kDa subunit family. FMN serves as cofactor. Requires [4Fe-4S] cluster as cofactor.

It catalyses the reaction a quinone + NADH + 5 H(+)(in) = a quinol + NAD(+) + 4 H(+)(out). Its function is as follows. NDH-1 shuttles electrons from NADH, via FMN and iron-sulfur (Fe-S) centers, to quinones in the respiratory chain. Couples the redox reaction to proton translocation (for every two electrons transferred, four hydrogen ions are translocated across the cytoplasmic membrane), and thus conserves the redox energy in a proton gradient. The sequence is that of NADH-quinone oxidoreductase subunit F (nuoF) from Rickettsia rickettsii (strain Sheila Smith).